Here is a 484-residue protein sequence, read N- to C-terminus: Cobyric acid synthase (484 aa).

One can recognise a GATase cobBQ-type domain in the interval 253–430 (SLRVAVVRFP…WHGAFEHDEF (178 aa)). Catalysis depends on Cys-334, which acts as the Nucleophile. The active site involves His-422.

It belongs to the CobB/CobQ family. CobQ subfamily.

The protein operates within cofactor biosynthesis; adenosylcobalamin biosynthesis. In terms of biological role, catalyzes amidations at positions B, D, E, and G on adenosylcobyrinic A,C-diamide. NH(2) groups are provided by glutamine, and one molecule of ATP is hydrogenolyzed for each amidation. This Cutibacterium acnes (strain DSM 16379 / KPA171202) (Propionibacterium acnes) protein is Cobyric acid synthase.